Reading from the N-terminus, the 113-residue chain is Large ribosomal subunit protein bL20c (113 aa).

Belongs to the bacterial ribosomal protein bL20 family.

The protein localises to the plastid. It localises to the chloroplast. Functionally, binds directly to 23S ribosomal RNA and is necessary for the in vitro assembly process of the 50S ribosomal subunit. It is not involved in the protein synthesizing functions of that subunit. This chain is Large ribosomal subunit protein bL20c, found in Staurastrum punctulatum (Green alga).